Reading from the N-terminus, the 491-residue chain is Blue-light-activated histidine kinase (491 aa).

In terms of domain architecture, PAS 1 spans 19–92 (EANPFTAAVE…EIIHSALEAE (74 aa)). Cysteine 69 carries the post-translational modification S-4a-FMN cysteine. The PAC domain maps to 93–147 (QSVEIDILNYKKSGEPFWNRLHISPVKTENGELHHFVSSQLDVTLELGKLVELEK). The region spanning 159–230 (SSDQLQYIVE…QRSQESFATG (72 aa)) is the PAS 2 domain. An HWE histidine kinase domain region spans residues 286–368 (EISHRFKNSM…GHRIRTSGPE (83 aa)). Phosphohistidine; by autocatalysis is present on histidine 289.

Post-translationally, FMN binds covalently to cysteine after exposure to blue light and this bond is spontaneously broken in the dark.

The enzyme catalyses ATP + protein L-histidine = ADP + protein N-phospho-L-histidine.. In terms of biological role, photosensitive kinase that is involved in increased bacterial virulence upon exposure to light. The polypeptide is Blue-light-activated histidine kinase (Brucella anthropi (strain ATCC 49188 / DSM 6882 / CCUG 24695 / JCM 21032 / LMG 3331 / NBRC 15819 / NCTC 12168 / Alc 37) (Ochrobactrum anthropi)).